A 240-amino-acid polypeptide reads, in one-letter code: MADIKYKRVILKLSGEALAGDKGFGINPPVLKDVAKELKEVHDLGVQIAIVVGGGNMWRGVTGAELGMERAQADYIGMLATIMNALSLQDALESIGVPTRVQTSIEMRQIAEPYIRRKAIRHLEKDRIVIFAGGTGSPYFSTDTTAALRAAEINADAILMGKNGVDGVYSADPNKVKDATKFDHLTHMDIIEKNLHVMDTTASSLSMDNHIPLVVFNLNTSGNIMKVVTGQEVGTTIEGD.

12–15 contributes to the ATP binding site; that stretch reads KLSG. An involved in allosteric activation by GTP region spans residues 20–25; it reads GDKGFG. G54 lines the UMP pocket. Positions 55 and 59 each coordinate ATP. Residues D74 and 135–142 contribute to the UMP site; that span reads TGSPYFST. The ATP site is built by N163, Y169, and D172.

This sequence belongs to the UMP kinase family. As to quaternary structure, homohexamer.

The protein resides in the cytoplasm. It catalyses the reaction UMP + ATP = UDP + ADP. It functions in the pathway pyrimidine metabolism; CTP biosynthesis via de novo pathway; UDP from UMP (UMPK route): step 1/1. With respect to regulation, allosterically activated by GTP. Inhibited by UTP. Its function is as follows. Catalyzes the reversible phosphorylation of UMP to UDP. In Limosilactobacillus reuteri (strain DSM 20016) (Lactobacillus reuteri), this protein is Uridylate kinase.